We begin with the raw amino-acid sequence, 106 residues long: ATP-dependent Clp protease adapter protein ClpS (106 aa).

Positions 1-13 are enriched in polar residues; the sequence is MGNNSTWSQSENL. The tract at residues 1–21 is disordered; it reads MGNNSTWSQSENLTADKQKEK.

It belongs to the ClpS family. Binds to the N-terminal domain of the chaperone ClpA.

Its function is as follows. Involved in the modulation of the specificity of the ClpAP-mediated ATP-dependent protein degradation. This Pectobacterium carotovorum subsp. carotovorum (strain PC1) protein is ATP-dependent Clp protease adapter protein ClpS.